Here is a 388-residue protein sequence, read N- to C-terminus: MNLHEYQAKALFAEYGLPVSEGYACDTPQEAVEAAGHIGGDMWVVKCQVHAGGRGKAGGVKVTGDKEEIRAFAEHWLGKNLVTYQTDEKGQPVAKILVESCTDIANELYLGAVVDRATRRVVFMASTEGGVEIETVAEETPELIHKAIIDPLTGPQPYQARDLGFKLGLNPTQMKQFTKVFMGLATMFTDHDFALLEINPLVITTEGNIHCLDGKIGIDGNALFRQPKIRDMHDPSQDDAREAHAAKFELNYVALDGNVGCMVNGAGLAMGTMDIVNLHGGKPANFLDVGGGATKERVAEAFKIILSDANVKAVLVNIFGGIVRCDMIAEGIIGAVKEVGVEVPVVVRLEGTNADLGREVLANSGLDIIAAESLTDAAVKVVAAAEGK.

The ATP-grasp domain occupies 9–244; that stretch reads KALFAEYGLP…PSQDDAREAH (236 aa). Residues lysine 46, 53 to 55, glutamate 99, threonine 102, and glutamate 107 contribute to the ATP site; that span reads GRG. Residues asparagine 199 and aspartate 213 each contribute to the Mg(2+) site. Substrate-binding positions include asparagine 264 and 321–323; that span reads GIV.

This sequence belongs to the succinate/malate CoA ligase beta subunit family. As to quaternary structure, heterotetramer of two alpha and two beta subunits. Mg(2+) serves as cofactor.

The enzyme catalyses succinate + ATP + CoA = succinyl-CoA + ADP + phosphate. The catalysed reaction is GTP + succinate + CoA = succinyl-CoA + GDP + phosphate. The protein operates within carbohydrate metabolism; tricarboxylic acid cycle; succinate from succinyl-CoA (ligase route): step 1/1. Functionally, succinyl-CoA synthetase functions in the citric acid cycle (TCA), coupling the hydrolysis of succinyl-CoA to the synthesis of either ATP or GTP and thus represents the only step of substrate-level phosphorylation in the TCA. The beta subunit provides nucleotide specificity of the enzyme and binds the substrate succinate, while the binding sites for coenzyme A and phosphate are found in the alpha subunit. The protein is Succinate--CoA ligase [ADP-forming] subunit beta of Shewanella loihica (strain ATCC BAA-1088 / PV-4).